The following is a 186-amino-acid chain: MTVIADVISDASQRMSKTLEAAKEDFGTVSAGRANPALFQKVLVDYYGSPTPLAQLAGLQNPEARVLIVTPYDKGALKEIERAIVTMPSMSANVGNDGEIVRVTLPELTEDRRKEFVKIVRGKGEDAKVAIRNIRRRAKDELDALKGEVGDDEVARGEKELEALTRTNVDLVDEALKRKEAELLEV.

It belongs to the RRF family.

It is found in the cytoplasm. In terms of biological role, responsible for the release of ribosomes from messenger RNA at the termination of protein biosynthesis. May increase the efficiency of translation by recycling ribosomes from one round of translation to another. This chain is Ribosome-recycling factor, found in Leifsonia xyli subsp. xyli (strain CTCB07).